We begin with the raw amino-acid sequence, 333 residues long: Transaldolase (333 aa).

K135 serves as the catalytic Schiff-base intermediate with substrate.

It belongs to the transaldolase family. Type 1 subfamily. Homodimer.

It localises to the cytoplasm. It catalyses the reaction D-sedoheptulose 7-phosphate + D-glyceraldehyde 3-phosphate = D-erythrose 4-phosphate + beta-D-fructose 6-phosphate. It participates in carbohydrate degradation; pentose phosphate pathway; D-glyceraldehyde 3-phosphate and beta-D-fructose 6-phosphate from D-ribose 5-phosphate and D-xylulose 5-phosphate (non-oxidative stage): step 2/3. In terms of biological role, transaldolase is important for the balance of metabolites in the pentose-phosphate pathway. This is Transaldolase from Prochlorococcus marinus subsp. pastoris (strain CCMP1986 / NIES-2087 / MED4).